The chain runs to 179 residues: Diphosphoinositol polyphosphate phosphohydrolase 2 (179 aa).

Residues Arg-9, 17–19 (KKR), and 38–40 (SSR) contribute to the substrate site. The Nudix hydrolase domain maps to 17 to 143 (KKRAACLCFR…VHAEYLEKLK (127 aa)). Mg(2+)-binding residues include Gly-49 and Glu-65. Residues 50–71 (GGMEPEEEPGGAAVREVYEEAG) carry the Nudix box motif. Glu-68 acts as the Proton acceptor in catalysis. Glu-69 is a Mg(2+) binding site. Residues 88 to 90 (RKH), Arg-114, and Lys-132 contribute to the substrate site.

This sequence belongs to the Nudix hydrolase family. DIPP subfamily. Requires Mg(2+) as cofactor. Mn(2+) serves as cofactor.

Its subcellular location is the cytoplasm. The enzyme catalyses diphospho-myo-inositol polyphosphate + H2O = myo-inositol polyphosphate + phosphate.. The catalysed reaction is 5-diphospho-1D-myo-inositol 1,2,3,4,6-pentakisphosphate + H2O = 1D-myo-inositol hexakisphosphate + phosphate + H(+). It carries out the reaction 3,5-bis(diphospho)-1D-myo-inositol 1,2,4,6-tetrakisphosphate + H2O = 3-diphospho-1D-myo-inositol 1,2,4,5,6-pentakisphosphate + phosphate + 2 H(+). It catalyses the reaction 5-diphospho-1D-myo-inositol 1,3,4,6-tetrakisphosphate + H2O = 1D-myo-inositol 1,3,4,5,6-pentakisphosphate + phosphate + H(+). The enzyme catalyses P(1),P(6)-bis(5'-adenosyl) hexaphosphate + H2O = 2 ATP + 2 H(+). The catalysed reaction is P(1),P(5)-bis(5'-adenosyl) pentaphosphate + H2O = ADP + ATP + 2 H(+). It carries out the reaction 5-phospho-alpha-D-ribose 1-diphosphate + H2O = alpha-D-ribose 1,5-bisphosphate + phosphate + H(+). Functionally, cleaves the beta-phosphate from diphosphoinositol polyphosphates such as PP-InsP5 (diphosphoinositol pentakisphosphate), PP-InsP4 (diphosphoinositol tetrakisphosphate) and [PP]2-InsP4 (bisdiphosphoinositol tetrakisphosphate), suggesting that it may play a role in signal transduction. Diadenosine polyphosphates, particularly Ap6A (P(1),P(6)-bis(5a-adenosyl) hexaphosphate) and Ap5A (P(1),P(5)-bis(5'-adenosyl) pentaphosphate) are downstream effectors of a signaling cascade that regulates cardiac KATP channels, can also be substrates, although with lower preference than the diphosphoinositol polyphosphates. Can also catalyze the hydrolysis of 5-phosphoribose 1-diphosphate, generating the glycolytic activator ribose 1,5-bisphosphate. Does not play a role in U8 snoRNA decapping activity. Binds U8 snoRNA. The protein is Diphosphoinositol polyphosphate phosphohydrolase 2 of Mus musculus (Mouse).